The primary structure comprises 229 residues: uncharacterized protein (229 aa).

7 helical membrane-spanning segments follow: residues 21–41 (IYSL…LMLY), 56–76 (MIYY…SGAA), 83–103 (ALPI…FIIV), 109–129 (TVFQ…IIGV), 141–161 (AMFA…FIGS), 162–182 (GMMS…LIAS), and 202–222 (WAVA…ISLL).

The protein belongs to the BI1 family.

It is found in the cell membrane. This is an uncharacterized protein from Streptococcus pyogenes serotype M6 (strain ATCC BAA-946 / MGAS10394).